A 1006-amino-acid chain; its full sequence is Transmembrane channel-like protein 5 (1006 aa).

A disordered region spans residues Met1–Glu289. The Extracellular segment spans residues Met1 to Lys458. Composition is skewed to polar residues over residues Ser20–Leu30, Thr50–Ser59, and Arg76–His101. Residues Ala138–Ser149 are compositionally biased toward low complexity. Residues Arg239–His250 are compositionally biased toward basic and acidic residues. Residues Phe459–Ala479 traverse the membrane as a helical segment. At Lys480 to Gln485 the chain is on the cytoplasmic side. Residues Phe486 to Tyr508 traverse the membrane as a helical segment. Over Thr509 to Gln525 the chain is Extracellular. Residues Leu526 to Ser546 form a helical membrane-spanning segment. Over Met547–Tyr619 the chain is Cytoplasmic. A helical membrane pass occupies residues Met620–Leu640. Topologically, residues Ala641–Pro654 are extracellular. A helical membrane pass occupies residues Gly655–Tyr675. Residues Ser676 to Asn698 lie on the Cytoplasmic side of the membrane. A helical membrane pass occupies residues Ile699–Leu719. Over Ser720–Asp732 the chain is Extracellular. A helical transmembrane segment spans residues Ile733–Phe753. The Cytoplasmic portion of the chain corresponds to Leu754 to Leu786. Residues Val787–Ile807 form a helical membrane-spanning segment. Topologically, residues Met808–Phe835 are extracellular. Residues Phe836–Ile856 form a helical membrane-spanning segment. The Cytoplasmic segment spans residues Trp857 to Asn900. The helical transmembrane segment at Leu901 to Leu921 threads the bilayer. At Tyr922 to Ala1006 the chain is on the extracellular side.

This sequence belongs to the TMC family.

Its subcellular location is the membrane. Functionally, probable component of an ion channel. Molecular function hasn't been characterized yet. In Homo sapiens (Human), this protein is Transmembrane channel-like protein 5.